A 547-amino-acid polypeptide reads, in one-letter code: Chaperonin GroEL (547 aa).

ATP is bound by residues 30–33 (TLGP), Lys51, 87–91 (DGTTT), Gly415, and Asp496.

It belongs to the chaperonin (HSP60) family. Forms a cylinder of 14 subunits composed of two heptameric rings stacked back-to-back. Interacts with the co-chaperonin GroES.

The protein localises to the cytoplasm. It carries out the reaction ATP + H2O + a folded polypeptide = ADP + phosphate + an unfolded polypeptide.. Functionally, together with its co-chaperonin GroES, plays an essential role in assisting protein folding. The GroEL-GroES system forms a nano-cage that allows encapsulation of the non-native substrate proteins and provides a physical environment optimized to promote and accelerate protein folding. The polypeptide is Chaperonin GroEL (Chlorobium phaeobacteroides (strain DSM 266 / SMG 266 / 2430)).